The chain runs to 448 residues: Phosphoglucosamine mutase (448 aa).

Ser-101 serves as the catalytic Phosphoserine intermediate. Mg(2+)-binding residues include Ser-101, Asp-242, Asp-244, and Asp-246. Ser-101 carries the post-translational modification Phosphoserine.

Belongs to the phosphohexose mutase family. The cofactor is Mg(2+). Post-translationally, activated by phosphorylation.

It carries out the reaction alpha-D-glucosamine 1-phosphate = D-glucosamine 6-phosphate. Functionally, catalyzes the conversion of glucosamine-6-phosphate to glucosamine-1-phosphate. The sequence is that of Phosphoglucosamine mutase from Afipia carboxidovorans (strain ATCC 49405 / DSM 1227 / KCTC 32145 / OM5) (Oligotropha carboxidovorans).